A 121-amino-acid chain; its full sequence is Large ribosomal subunit protein bL12 (121 aa).

The protein belongs to the bacterial ribosomal protein bL12 family. As to quaternary structure, homodimer. Part of the ribosomal stalk of the 50S ribosomal subunit. Forms a multimeric L10(L12)X complex, where L10 forms an elongated spine to which 2 to 4 L12 dimers bind in a sequential fashion. Binds GTP-bound translation factors.

Its function is as follows. Forms part of the ribosomal stalk which helps the ribosome interact with GTP-bound translation factors. Is thus essential for accurate translation. In Acinetobacter baylyi (strain ATCC 33305 / BD413 / ADP1), this protein is Large ribosomal subunit protein bL12.